We begin with the raw amino-acid sequence, 89 residues long: Small ribosomal subunit protein uS14 (89 aa).

It belongs to the universal ribosomal protein uS14 family. In terms of assembly, part of the 30S ribosomal subunit. Contacts proteins S3 and S10.

Binds 16S rRNA, required for the assembly of 30S particles and may also be responsible for determining the conformation of the 16S rRNA at the A site. The polypeptide is Small ribosomal subunit protein uS14 (Onion yellows phytoplasma (strain OY-M)).